The chain runs to 482 residues: ATP synthase subunit beta (482 aa).

162-169 (GGAGVGKT) contacts ATP.

The protein belongs to the ATPase alpha/beta chains family. F-type ATPases have 2 components, CF(1) - the catalytic core - and CF(0) - the membrane proton channel. CF(1) has five subunits: alpha(3), beta(3), gamma(1), delta(1), epsilon(1). CF(0) has four main subunits: a(1), b(1), b'(1) and c(9-12).

Its subcellular location is the cellular thylakoid membrane. The enzyme catalyses ATP + H2O + 4 H(+)(in) = ADP + phosphate + 5 H(+)(out). Functionally, produces ATP from ADP in the presence of a proton gradient across the membrane. The catalytic sites are hosted primarily by the beta subunits. This chain is ATP synthase subunit beta, found in Nostoc sp. (strain PCC 7120 / SAG 25.82 / UTEX 2576).